Reading from the N-terminus, the 275-residue chain is Large ribosomal subunit protein uL2 (275 aa).

Positions 223–275 are disordered; that stretch reads VVMNPVDHPHGGGEGKSSGGRHPVSPWGMPTKGYKTRKNKGTDQYIVRRRNKK.

This sequence belongs to the universal ribosomal protein uL2 family. Part of the 50S ribosomal subunit. Forms a bridge to the 30S subunit in the 70S ribosome.

One of the primary rRNA binding proteins. Required for association of the 30S and 50S subunits to form the 70S ribosome, for tRNA binding and peptide bond formation. It has been suggested to have peptidyltransferase activity; this is somewhat controversial. Makes several contacts with the 16S rRNA in the 70S ribosome. The sequence is that of Large ribosomal subunit protein uL2 from Psychromonas ingrahamii (strain DSM 17664 / CCUG 51855 / 37).